The primary structure comprises 739 residues: Catalase-peroxidase 2 (739 aa).

Positions 1–26 (MKKTTIPTLSALTLAMSLAFGGAAIA) are cleaved as a signal peptide. Residues 105–227 (WHSAGVYRIF…MGATQMGLIY (123 aa)) constitute a cross-link (tryptophyl-tyrosyl-methioninium (Trp-Tyr) (with M-253)). The active-site Proton acceptor is the His106. The tryptophyl-tyrosyl-methioninium (Tyr-Met) (with W-105) cross-link spans 227–253 (YVNPEGPNGVPDPLASAKEIRDTFGRM). Residue His268 coordinates heme b.

The protein belongs to the peroxidase family. Peroxidase/catalase subfamily. As to quaternary structure, homodimer or homotetramer. Requires heme b as cofactor. Post-translationally, formation of the three residue Trp-Tyr-Met cross-link is important for the catalase, but not the peroxidase activity of the enzyme.

The catalysed reaction is H2O2 + AH2 = A + 2 H2O. The enzyme catalyses 2 H2O2 = O2 + 2 H2O. In terms of biological role, bifunctional enzyme with both catalase and broad-spectrum peroxidase activity. In Shewanella sp. (strain MR-4), this protein is Catalase-peroxidase 2.